Consider the following 446-residue polypeptide: Exodeoxyribonuclease 7 large subunit (446 aa).

The protein belongs to the XseA family. In terms of assembly, heterooligomer composed of large and small subunits.

It localises to the cytoplasm. The enzyme catalyses Exonucleolytic cleavage in either 5'- to 3'- or 3'- to 5'-direction to yield nucleoside 5'-phosphates.. In terms of biological role, bidirectionally degrades single-stranded DNA into large acid-insoluble oligonucleotides, which are then degraded further into small acid-soluble oligonucleotides. The polypeptide is Exodeoxyribonuclease 7 large subunit (Ligilactobacillus salivarius (strain UCC118) (Lactobacillus salivarius)).